The chain runs to 182 residues: ADP-ribosylation factor-like protein 3 (182 aa).

A lipid anchor (N-myristoyl glycine) is attached at G2. Phosphoserine is present on S5. GTP is bound by residues G24 to T31, T48, D67 to Q71, G70, N126 to D129, and S159 to L161. T31 and T48 together coordinate Mg(2+).

This sequence belongs to the small GTPase superfamily. Arf family. Found in a complex with ARL3, RP2 and UNC119 (or UNC119B); RP2 induces hydrolysis of GTP ARL3 in the complex, leading to the release of UNC119 (or UNC119B). Interacts with RP2; interaction is direct and stimulated with the activated GTP-bound form of ARL3. Interacts with SYS1. The GTP-bound form interacts with ARL2BP and PDE6D. Microtubule-associated protein. May interact with GOLGA4. Interacts with GGA1; the interaction recruits PKD1:PKD2 complex to trans-Golgi network and is required for ciliary targeting of PKD1:PKD2 complex. Interacts with DNAAF9. As to expression, expressed in the retina. Strongly expressed in connecting cilium, the myoid region of the inner segments (IS) and in cone photoreceptors (at protein level).

It is found in the golgi apparatus membrane. The protein resides in the cytoplasm. The protein localises to the cytoskeleton. Its subcellular location is the spindle. It localises to the nucleus. It is found in the microtubule organizing center. The protein resides in the centrosome. The protein localises to the cell projection. Its subcellular location is the cilium. Small GTP-binding protein which cycles between an inactive GDP-bound and an active GTP-bound form, and the rate of cycling is regulated by guanine nucleotide exchange factors (GEF) and GTPase-activating proteins (GAP). Required for normal cytokinesis and cilia signaling. Requires assistance from GTPase-activating proteins (GAPs) like RP2 and PDE6D, in order to cycle between inactive GDP-bound and active GTP-bound forms. Required for targeting proteins to the cilium, including myristoylated NPHP3 and prenylated INPP5E. Targets NPHP3 to the ciliary membrane by releasing myristoylated NPHP3 from UNC119B cargo adapter into the cilium. Required for PKD1:PKD2 complex targeting from the trans-Golgi network to the cilium. The polypeptide is ADP-ribosylation factor-like protein 3 (ARL3) (Homo sapiens (Human)).